The following is a 160-amino-acid chain: Fluoride-specific ion channel FluC (160 aa).

4 helical membrane-spanning segments follow: residues 5-25 (LFIS…GLLF), 34-54 (FGTL…LGLF), 67-87 (FLIT…SEVV), and 99-119 (FCVL…GIWI). 2 residues coordinate Na(+): Gly-74 and Thr-77.

The protein belongs to the fluoride channel Fluc/FEX (TC 1.A.43) family.

Its subcellular location is the cell inner membrane. The catalysed reaction is fluoride(in) = fluoride(out). Its activity is regulated as follows. Na(+) is not transported, but it plays an essential structural role and its presence is essential for fluoride channel function. Fluoride-specific ion channel. Important for reducing fluoride concentration in the cell, thus reducing its toxicity. The polypeptide is Fluoride-specific ion channel FluC (Haemophilus influenzae (strain ATCC 51907 / DSM 11121 / KW20 / Rd)).